Reading from the N-terminus, the 711-residue chain is Protein mono-ADP-ribosyltransferase PARP12 (711 aa).

3 consecutive C3H1-type zinc fingers follow at residues 103 to 128 (LCKFLIYGNCKFLKTGKNCRNGHNLK), 164 to 188 (ICLHYNKGDGPFGSCSFQKQCIKLH), and 189 to 211 (ICQYFLQGECKFGTSCKRSHEFT). The tract at residues 247–279 (SALSKVSPSPAGPQGSSERKDSSGPVSPGTPSQ) is disordered. Serine 268 carries the phosphoserine modification. C3H1-type zinc fingers lie at residues 280-307 (EESEQICLYHIRKSCSFQEKCHRVHFHL) and 281-306 (ESEQICLYHIRKSCSFQEKCHRVHFH). 2 consecutive WWE domains span residues 308-371 (PYRW…RLST) and 374-468 (SVTK…KVCR). At cysteine 484 the chain carries ADP-ribosylcysteine. One can recognise a PARP catalytic domain in the interval 494 to 708 (IPDYWDPAAL…IFVALGNLFT (215 aa)). ADP-ribosyl aspartic acid occurs at positions 610 and 621.

This sequence belongs to the ARTD/PARP family. In terms of assembly, interacts with PARP11; this interaction plays a key role in zika virus suppression. Interacts with ISG15. Post-translationally, auto-mono-ADP-ribosylated. In terms of processing, phosphorylated by PRKD1.

The protein resides in the nucleus. It localises to the golgi apparatus. Its subcellular location is the trans-Golgi network. The protein localises to the cytoplasm. It is found in the stress granule. The catalysed reaction is L-aspartyl-[protein] + NAD(+) = 4-O-(ADP-D-ribosyl)-L-aspartyl-[protein] + nicotinamide. It carries out the reaction L-cysteinyl-[protein] + NAD(+) = S-(ADP-D-ribosyl)-L-cysteinyl-[protein] + nicotinamide + H(+). Mono-ADP-ribosyltransferase that mediates mono-ADP-ribosylation of target proteins. Displays anti-alphavirus activity during IFN-gamma immune activation by directly ADP-ribosylating the alphaviral non-structural proteins nsP3 and nsP4. Acts as a component of the PRKD1-driven regulatory cascade that selectively controls a major branch of the basolateral transport pathway by catalyzing the MARylation of GOLGA1. Acts also as a key regulator of mitochondrial function, protein translation, and inflammation. Inhibits PINK1/Parkin-dependent mitophagy and promotes cartilage degeneration by inhibiting the ubiquitination and SUMOylation of MFN1/2 by upregulating ISG15 and ISGylation. In Mus musculus (Mouse), this protein is Protein mono-ADP-ribosyltransferase PARP12.